The primary structure comprises 517 residues: Lysophosphatidylcholine acyltransferase 2B (517 aa).

N-linked (GlcNAc...) asparagine glycosylation is present at Asn29. 3 helical membrane-spanning segments follow: residues 70-90 (IVFL…NLPI), 103-123 (LIKP…GFLI), and 137-157 (IFVV…VAGL). The HXXXXD motif motif lies at 143–148 (HSTFFD). 2 EF-hand domains span residues 388-423 (PISE…LCNP) and 425-460 (NTEK…AFGV). Asp401, Asn403, Asp405, Thr407, Glu412, Asp438, Asp440, Asp442, Tyr444, and Glu449 together coordinate Ca(2+).

It belongs to the 1-acyl-sn-glycerol-3-phosphate acyltransferase family.

It is found in the membrane. The protein operates within lipid metabolism; phospholipid metabolism. Its function is as follows. Probable acetyltransferase. In Rattus norvegicus (Rat), this protein is Lysophosphatidylcholine acyltransferase 2B (Lpcat2b).